The chain runs to 374 residues: Queuine tRNA-ribosyltransferase (374 aa).

The Proton acceptor role is filled by D89. Residues D89 to F93, D143, Q187, and G214 each bind substrate. Residues G245–D251 form an RNA binding region. The active-site Nucleophile is the D264. The RNA binding; important for wobble base 34 recognition stretch occupies residues T269–R273. Residues C302, C304, C307, and H333 each coordinate Zn(2+).

Belongs to the queuine tRNA-ribosyltransferase family. Homodimer. Within each dimer, one monomer is responsible for RNA recognition and catalysis, while the other monomer binds to the replacement base PreQ1. The cofactor is Zn(2+).

The catalysed reaction is 7-aminomethyl-7-carbaguanine + guanosine(34) in tRNA = 7-aminomethyl-7-carbaguanosine(34) in tRNA + guanine. It functions in the pathway tRNA modification; tRNA-queuosine biosynthesis. Catalyzes the base-exchange of a guanine (G) residue with the queuine precursor 7-aminomethyl-7-deazaguanine (PreQ1) at position 34 (anticodon wobble position) in tRNAs with GU(N) anticodons (tRNA-Asp, -Asn, -His and -Tyr). Catalysis occurs through a double-displacement mechanism. The nucleophile active site attacks the C1' of nucleotide 34 to detach the guanine base from the RNA, forming a covalent enzyme-RNA intermediate. The proton acceptor active site deprotonates the incoming PreQ1, allowing a nucleophilic attack on the C1' of the ribose to form the product. After dissociation, two additional enzymatic reactions on the tRNA convert PreQ1 to queuine (Q), resulting in the hypermodified nucleoside queuosine (7-(((4,5-cis-dihydroxy-2-cyclopenten-1-yl)amino)methyl)-7-deazaguanosine). This is Queuine tRNA-ribosyltransferase from Yersinia pseudotuberculosis serotype O:1b (strain IP 31758).